The sequence spans 71 residues: Large ribosomal subunit protein uL29 (71 aa).

This sequence belongs to the universal ribosomal protein uL29 family.

The chain is Large ribosomal subunit protein uL29 (rpl29) from Halobacterium salinarum (strain ATCC 700922 / JCM 11081 / NRC-1) (Halobacterium halobium).